The sequence spans 247 residues: tRNA pseudouridine synthase A (247 aa).

Catalysis depends on aspartate 53, which acts as the Nucleophile. Tyrosine 111 is a substrate binding site.

Belongs to the tRNA pseudouridine synthase TruA family. In terms of assembly, homodimer.

It catalyses the reaction uridine(38/39/40) in tRNA = pseudouridine(38/39/40) in tRNA. Formation of pseudouridine at positions 38, 39 and 40 in the anticodon stem and loop of transfer RNAs. This Lacticaseibacillus casei (strain BL23) (Lactobacillus casei) protein is tRNA pseudouridine synthase A.